Here is a 104-residue protein sequence, read N- to C-terminus: ATP-dependent Clp protease adapter protein ClpS (104 aa).

It belongs to the ClpS family. Binds to the N-terminal domain of the chaperone ClpA.

Functionally, involved in the modulation of the specificity of the ClpAP-mediated ATP-dependent protein degradation. The chain is ATP-dependent Clp protease adapter protein ClpS from Burkholderia thailandensis (strain ATCC 700388 / DSM 13276 / CCUG 48851 / CIP 106301 / E264).